A 335-amino-acid chain; its full sequence is MTVLIAKDLTFEPVVHRYDWTVDEVRELLERPLMDLLWQAQLVHRTANPGYRVQLASLLSVKTGGCQEDCAYCPQSMHNSSDVEGQPDLVVQIQTVLERARAAKDAGADRFCMGWAWREIRDGAQFEAMLAMVSGVRELGLEACVTAGMLTEKQASRLADAGLTAYNHNLDTSPEYYDQIITTRTYQERIETLQKVRSAGITLCCGGIIGMGESTLDRASLLCVLANINPHPESVPINGLVAVEGTPLQDLPAVDPLEMVRMVATARILMPRSRVRLSAGREQLGREAQILCLQAGADSIFYGDSLLTTSNPDVKTDRELLSQAGVHANWEESDE.

The 231-residue stretch at 51-281 folds into the Radical SAM core domain; that stretch reads YRVQLASLLS…RSRVRLSAGR (231 aa). Cysteine 66, cysteine 70, and cysteine 73 together coordinate [4Fe-4S] cluster. Cysteine 112, cysteine 144, cysteine 204, and arginine 276 together coordinate [2Fe-2S] cluster.

The protein belongs to the radical SAM superfamily. Biotin synthase family. In terms of assembly, homodimer. Requires [4Fe-4S] cluster as cofactor. [2Fe-2S] cluster serves as cofactor.

The enzyme catalyses (4R,5S)-dethiobiotin + (sulfur carrier)-SH + 2 reduced [2Fe-2S]-[ferredoxin] + 2 S-adenosyl-L-methionine = (sulfur carrier)-H + biotin + 2 5'-deoxyadenosine + 2 L-methionine + 2 oxidized [2Fe-2S]-[ferredoxin]. The protein operates within cofactor biosynthesis; biotin biosynthesis; biotin from 7,8-diaminononanoate: step 2/2. In terms of biological role, catalyzes the conversion of dethiobiotin (DTB) to biotin by the insertion of a sulfur atom into dethiobiotin via a radical-based mechanism. The polypeptide is Biotin synthase (Prochlorococcus marinus (strain MIT 9303)).